Here is a 147-residue protein sequence, read N- to C-terminus: Hemoglobin subunit epsilon (147 aa).

A Globin domain is found at 3–147; sequence HFTAEEKAAI…VAIALGHKYH (145 aa). A phosphoserine mark is found at Ser14 and Ser51. 2 residues coordinate heme b: His64 and His93.

It belongs to the globin family. As to quaternary structure, heterotetramer of two alpha chains and two epsilon chains in early embryonic hemoglobin Gower-2; two zeta chains and two epsilon chains in early embryonic hemoglobin Gower-1. Red blood cells.

Functionally, the epsilon chain is a beta-type chain of early mammalian embryonic hemoglobin. This is Hemoglobin subunit epsilon (HBE1) from Callithrix jacchus (White-tufted-ear marmoset).